The sequence spans 185 residues: Translation initiation factor IF-3 (185 aa).

Belongs to the IF-3 family. Monomer.

It localises to the cytoplasm. In terms of biological role, IF-3 binds to the 30S ribosomal subunit and shifts the equilibrium between 70S ribosomes and their 50S and 30S subunits in favor of the free subunits, thus enhancing the availability of 30S subunits on which protein synthesis initiation begins. In Rickettsia typhi (strain ATCC VR-144 / Wilmington), this protein is Translation initiation factor IF-3.